A 76-amino-acid polypeptide reads, in one-letter code: Putative defensin-like protein 121 (76 aa).

The N-terminal stretch at 1–26 (MTYKATILAIFMIILVLGIGTKETRG) is a signal peptide. Intrachain disulfides connect C30-C74, C39-C59, C44-C68, and C48-C70.

It belongs to the DEFL family.

It localises to the secreted. This Arabidopsis thaliana (Mouse-ear cress) protein is Putative defensin-like protein 121 (LCR55).